A 265-amino-acid chain; its full sequence is Orotidine 5'-phosphate decarboxylase (265 aa).

Substrate contacts are provided by residues D37, 59 to 61, 91 to 100, Y217, and R235; these read KTH and DRKFADIGNT. Residue K93 is the Proton donor of the active site.

It belongs to the OMP decarboxylase family.

It carries out the reaction orotidine 5'-phosphate + H(+) = UMP + CO2. Its pathway is pyrimidine metabolism; UMP biosynthesis via de novo pathway; UMP from orotate: step 2/2. This is Orotidine 5'-phosphate decarboxylase (URA3) from Diutina rugosa (Yeast).